The following is a 118-amino-acid chain: Small ribosomal subunit protein uS13 (118 aa).

Residues 93-118 are disordered; sequence RGLPVRGQRTKTNARTRKGPRKPIRK.

This sequence belongs to the universal ribosomal protein uS13 family. As to quaternary structure, part of the 30S ribosomal subunit. Forms a loose heterodimer with protein S19. Forms two bridges to the 50S subunit in the 70S ribosome.

Located at the top of the head of the 30S subunit, it contacts several helices of the 16S rRNA. In the 70S ribosome it contacts the 23S rRNA (bridge B1a) and protein L5 of the 50S subunit (bridge B1b), connecting the 2 subunits; these bridges are implicated in subunit movement. Contacts the tRNAs in the A and P-sites. The polypeptide is Small ribosomal subunit protein uS13 (Pseudomonas fluorescens (strain ATCC BAA-477 / NRRL B-23932 / Pf-5)).